A 489-amino-acid chain; its full sequence is Para-nitrobenzyl esterase (489 aa).

Ser189 functions as the Acyl-ester intermediate in the catalytic mechanism. A Phosphoserine modification is found at Ser189. Active-site charge relay system residues include Glu310 and His399.

Belongs to the type-B carboxylesterase/lipase family. As to quaternary structure, monomer.

In terms of biological role, catalyzes hydrolysis of several beta-lactam antibiotic PNB esters to the corresponding free acid and PNB alcohol. The protein is Para-nitrobenzyl esterase (pnbA) of Bacillus subtilis (strain 168).